A 555-amino-acid polypeptide reads, in one-letter code: F-box protein COS111 (555 aa).

Disordered stretches follow at residues 31-82 and 124-147; these read MSVS…SVSN and DHSIKSGVTRSTVSTVRPTSKQHH. Over residues 32 to 42 the composition is skewed to low complexity; it reads SVSSRSSQEES. Positions 48–61 are enriched in polar residues; the sequence is ESVSSLSMQEQQTE. Positions 129 to 142 are enriched in low complexity; that stretch reads SGVTRSTVSTVRPT. Residues 196-246 form the F-box domain; it reads HKDLNSLPHEIMSKIVSHLDQRDVTMCLYVNKNMYSTAVRQLYKEPFFSST. The span at 327–346 shows a compositional bias: low complexity; that stretch reads SSSSLSCSRTSSNSNSSTES. Positions 327-354 are disordered; sequence SSSSLSCSRTSSNSNSSTESKPVKKRRS.

In terms of biological role, F-box protein probably involved in ubiquitin conjugation pathway. This is F-box protein COS111 (COS111) from Yarrowia lipolytica (strain CLIB 122 / E 150) (Yeast).